Here is a 283-residue protein sequence, read N- to C-terminus: Phosphatidylserine decarboxylase proenzyme (283 aa).

Residues D88, H145, and S248 each act as charge relay system; for autoendoproteolytic cleavage activity in the active site. Residue S248 is the Schiff-base intermediate with substrate; via pyruvic acid; for decarboxylase activity of the active site. S248 is modified (pyruvic acid (Ser); by autocatalysis).

The protein belongs to the phosphatidylserine decarboxylase family. PSD-B subfamily. Prokaryotic type I sub-subfamily. Heterodimer of a large membrane-associated beta subunit and a small pyruvoyl-containing alpha subunit. Pyruvate serves as cofactor. Is synthesized initially as an inactive proenzyme. Formation of the active enzyme involves a self-maturation process in which the active site pyruvoyl group is generated from an internal serine residue via an autocatalytic post-translational modification. Two non-identical subunits are generated from the proenzyme in this reaction, and the pyruvate is formed at the N-terminus of the alpha chain, which is derived from the carboxyl end of the proenzyme. The autoendoproteolytic cleavage occurs by a canonical serine protease mechanism, in which the side chain hydroxyl group of the serine supplies its oxygen atom to form the C-terminus of the beta chain, while the remainder of the serine residue undergoes an oxidative deamination to produce ammonia and the pyruvoyl prosthetic group on the alpha chain. During this reaction, the Ser that is part of the protease active site of the proenzyme becomes the pyruvoyl prosthetic group, which constitutes an essential element of the active site of the mature decarboxylase.

The protein resides in the cell membrane. The catalysed reaction is a 1,2-diacyl-sn-glycero-3-phospho-L-serine + H(+) = a 1,2-diacyl-sn-glycero-3-phosphoethanolamine + CO2. It functions in the pathway phospholipid metabolism; phosphatidylethanolamine biosynthesis; phosphatidylethanolamine from CDP-diacylglycerol: step 2/2. Its function is as follows. Catalyzes the formation of phosphatidylethanolamine (PtdEtn) from phosphatidylserine (PtdSer). This is Phosphatidylserine decarboxylase proenzyme from Methylibium petroleiphilum (strain ATCC BAA-1232 / LMG 22953 / PM1).